The following is a 282-amino-acid chain: 4-diphosphocytidyl-2-C-methyl-D-erythritol kinase (282 aa).

Residue K11 is part of the active site. 93–103 serves as a coordination point for ATP; that stretch reads LVSAGLAGGSA. The active site involves D133.

It belongs to the GHMP kinase family. IspE subfamily.

It carries out the reaction 4-CDP-2-C-methyl-D-erythritol + ATP = 4-CDP-2-C-methyl-D-erythritol 2-phosphate + ADP + H(+). The protein operates within isoprenoid biosynthesis; isopentenyl diphosphate biosynthesis via DXP pathway; isopentenyl diphosphate from 1-deoxy-D-xylulose 5-phosphate: step 3/6. Its function is as follows. Catalyzes the phosphorylation of the position 2 hydroxy group of 4-diphosphocytidyl-2C-methyl-D-erythritol. The polypeptide is 4-diphosphocytidyl-2-C-methyl-D-erythritol kinase (Ehrlichia canis (strain Jake)).